We begin with the raw amino-acid sequence, 443 residues long: F-box only protein 39 (443 aa).

In terms of domain architecture, F-box spans 13-59; sequence QSCWATLPDVCLRRVFWWLGDRDRSRAALVCRKWNQIMYSADLWRYR.

As to quaternary structure, directly interacts with SKP1 and CUL1.

Its function is as follows. Substrate-recognition component of the SCF (SKP1-CUL1-F-box protein)-type E3 ubiquitin ligase complex. The protein is F-box only protein 39 (Fbxo39) of Rattus norvegicus (Rat).